We begin with the raw amino-acid sequence, 335 residues long: Glycerol-3-phosphate dehydrogenase [NAD(P)+] (335 aa).

NADPH is bound by residues W14, R33, and K111. The sn-glycerol 3-phosphate site is built by K111, G140, and S142. Residue A144 participates in NADPH binding. Residues K195, D248, S258, R259, and N260 each coordinate sn-glycerol 3-phosphate. Residue K195 is the Proton acceptor of the active site. R259 contacts NADPH. 2 residues coordinate NADPH: V283 and E285.

This sequence belongs to the NAD-dependent glycerol-3-phosphate dehydrogenase family.

The protein localises to the cytoplasm. It catalyses the reaction sn-glycerol 3-phosphate + NAD(+) = dihydroxyacetone phosphate + NADH + H(+). The catalysed reaction is sn-glycerol 3-phosphate + NADP(+) = dihydroxyacetone phosphate + NADPH + H(+). Its pathway is membrane lipid metabolism; glycerophospholipid metabolism. Catalyzes the reduction of the glycolytic intermediate dihydroxyacetone phosphate (DHAP) to sn-glycerol 3-phosphate (G3P), the key precursor for phospholipid synthesis. In Burkholderia mallei (strain NCTC 10247), this protein is Glycerol-3-phosphate dehydrogenase [NAD(P)+].